The primary structure comprises 1182 residues: Protein patched homolog 2 (1182 aa).

The Cytoplasmic portion of the chain corresponds to 1–57 (MVRPLSLGELPPSYTPPARSSAPHILAGSLQAPLWLRAYFQGLLFSLGCRIQKHCGK). Residues 58–78 (VLFLGLVAFGALALGLRVAVI) form a helical membrane-spanning segment. Residues 79–394 (ETDLEQLWVE…DILRAFSEVS (316 aa)) lie on the Extracellular side of the membrane. N-linked (GlcNAc...) asparagine glycosylation occurs at Asn370. One can recognise an SSD domain in the interval 394–552 (STTRVVGGYL…MLVFPAILSL (159 aa)). A helical membrane pass occupies residues 395 to 414 (TTRVVGGYLLMLAYACVTML). The Cytoplasmic segment spans residues 415–428 (RWDCAQSQGAVGLA). The helical transmembrane segment at 429–449 (GVLLVALAVASGLGLCALLGI) threads the bilayer. Residues 450 to 457 (TFNAATTQ) are Extracellular-facing. Residues 458 to 478 (VLPFLALGIGVDDIFLLAHAF) form a helical membrane-spanning segment. Topologically, residues 479–501 (TKAPPDTPLPERMGECLRSTGTS) are cytoplasmic. A helical membrane pass occupies residues 502-522 (VALTSVNNMVAFFMAALVPIP). Over 523 to 531 (ALRAFSLQA) the chain is Extracellular. The helical transmembrane segment at 532-552 (AIVVGCNFAAVMLVFPAILSL) threads the bilayer. Topologically, residues 553–686 (DLRRRHRQRL…APLLLQTRAK (134 aa)) are cytoplasmic. Residues 687 to 707 (ALVLLFFGALLGLSLYGATLV) traverse the membrane as a helical segment. Residues 708–963 (QDGLALTDVV…WEQYLGLRRC (256 aa)) lie on the Extracellular side of the membrane. Asn812 carries N-linked (GlcNAc...) asparagine glycosylation. Residues 964 to 984 (FLLAVCILLVCTFLVCALLLL) form a helical membrane-spanning segment. The Cytoplasmic segment spans residues 985–991 (SPWTAGL). Residues 992-1012 (IVLVLAMMTVELFGIMGFLGI) form a helical membrane-spanning segment. Residue Lys1013 is a topological domain, extracellular. A helical membrane pass occupies residues 1014-1034 (LSAIPVVILVASIGIGVEFTV). Topologically, residues 1035–1064 (HVALGFLTSHGSRNLRAASALEQTFAPVTD) are cytoplasmic. A helical transmembrane segment spans residues 1065–1085 (GAVSTLLGLLMLAGSNFDFII). A topological domain (extracellular) is located at residue Arg1086. A helical membrane pass occupies residues 1087 to 1107 (YFFVVLTVLTLLGLLHGLLLL). Residues 1108-1182 (PVLLSILGPP…YVHPASEEPT (75 aa)) are Cytoplasmic-facing.

The protein belongs to the patched family. In terms of tissue distribution, expressed in epithelial cells of the developing hair, tooth and whisker.

It is found in the membrane. Its function is as follows. Plays a role in the control of cellular growth. May have a role in epidermal development. May act as a receptor for Sonic hedgehog (SHH). This Mus musculus (Mouse) protein is Protein patched homolog 2 (Ptch2).